We begin with the raw amino-acid sequence, 476 residues long: Glycogen synthase (476 aa).

An ADP-alpha-D-glucose-binding site is contributed by Lys-15.

This sequence belongs to the glycosyltransferase 1 family. Bacterial/plant glycogen synthase subfamily.

The catalysed reaction is [(1-&gt;4)-alpha-D-glucosyl](n) + ADP-alpha-D-glucose = [(1-&gt;4)-alpha-D-glucosyl](n+1) + ADP + H(+). It functions in the pathway glycan biosynthesis; glycogen biosynthesis. Synthesizes alpha-1,4-glucan chains using ADP-glucose. This chain is Glycogen synthase, found in Streptococcus equi subsp. zooepidemicus (strain H70).